Consider the following 182-residue polypeptide: Inner membrane-spanning protein YciB (182 aa).

5 helical membrane-spanning segments follow: residues 22 to 42 (IYAA…VVWV), 53 to 73 (ITLV…NEAF), 76 to 96 (WKVT…QFLF), 121 to 141 (FSWG…AFYL), and 149 to 169 (FKVF…GIYI).

It belongs to the YciB family.

The protein localises to the cell inner membrane. In terms of biological role, plays a role in cell envelope biogenesis, maintenance of cell envelope integrity and membrane homeostasis. The polypeptide is Inner membrane-spanning protein YciB (Tolumonas auensis (strain DSM 9187 / NBRC 110442 / TA 4)).